Consider the following 556-residue polypeptide: Phosphoglucomutase (556 aa).

Alpha-D-glucose 1,6-bisphosphate contacts are provided by Arg-22 and Ser-114. Residue Ser-114 is the Phosphoserine intermediate of the active site. Mg(2+)-binding residues include Ser-114, Asp-279, Asp-281, and Asp-283. At Ser-114 the chain carries Phosphoserine. Positions 283, 284, 347, 366, 368, and 379 each coordinate alpha-D-glucose 1,6-bisphosphate.

Belongs to the phosphohexose mutase family. Monomer. The cofactor is Mg(2+).

The protein localises to the cytoplasm. It catalyses the reaction alpha-D-glucose 1-phosphate = alpha-D-glucose 6-phosphate. The enzyme catalyses O-phospho-L-seryl-[protein] + alpha-D-glucose 1-phosphate = alpha-D-glucose 1,6-bisphosphate + L-seryl-[protein]. It carries out the reaction alpha-D-glucose 1,6-bisphosphate + L-seryl-[protein] = O-phospho-L-seryl-[protein] + alpha-D-glucose 6-phosphate. Its function is as follows. Catalyzes the reversible isomerization of alpha-D-glucose 1-phosphate to alpha-D-glucose 6-phosphate. The mechanism proceeds via the intermediate compound alpha-D-glucose 1,6-bisphosphate. Key enzyme in hexose metabolism. The reverse reaction is an essential step for biosynthesis because glucose 1-phosphate is the starting point for the synthesis of UDP-glucose, which acts as a precursor for the synthesis of oligosaccharides and trehalose. The polypeptide is Phosphoglucomutase (pgmB) (Emericella nidulans (strain FGSC A4 / ATCC 38163 / CBS 112.46 / NRRL 194 / M139) (Aspergillus nidulans)).